A 168-amino-acid chain; its full sequence is Crossover junction endodeoxyribonuclease RuvC (168 aa).

Catalysis depends on residues Asp9, Glu70, and Asp145. Asp9, Glu70, and Asp145 together coordinate Mg(2+).

It belongs to the RuvC family. In terms of assembly, homodimer which binds Holliday junction (HJ) DNA. The HJ becomes 2-fold symmetrical on binding to RuvC with unstacked arms; it has a different conformation from HJ DNA in complex with RuvA. In the full resolvosome a probable DNA-RuvA(4)-RuvB(12)-RuvC(2) complex forms which resolves the HJ. The cofactor is Mg(2+).

The protein localises to the cytoplasm. It catalyses the reaction Endonucleolytic cleavage at a junction such as a reciprocal single-stranded crossover between two homologous DNA duplexes (Holliday junction).. The RuvA-RuvB-RuvC complex processes Holliday junction (HJ) DNA during genetic recombination and DNA repair. Endonuclease that resolves HJ intermediates. Cleaves cruciform DNA by making single-stranded nicks across the HJ at symmetrical positions within the homologous arms, yielding a 5'-phosphate and a 3'-hydroxyl group; requires a central core of homology in the junction. The consensus cleavage sequence is 5'-(A/T)TT(C/G)-3'. Cleavage occurs on the 3'-side of the TT dinucleotide at the point of strand exchange. HJ branch migration catalyzed by RuvA-RuvB allows RuvC to scan DNA until it finds its consensus sequence, where it cleaves and resolves the cruciform DNA. The chain is Crossover junction endodeoxyribonuclease RuvC from Chlamydia pneumoniae (Chlamydophila pneumoniae).